The following is a 173-amino-acid chain: Bifunctional protein PyrR (173 aa).

Positions 94–106 (VILIDDVLYTGRT) match the PRPP-binding motif.

The protein belongs to the purine/pyrimidine phosphoribosyltransferase family. PyrR subfamily. In terms of assembly, homodimer and homohexamer; in equilibrium.

It catalyses the reaction UMP + diphosphate = 5-phospho-alpha-D-ribose 1-diphosphate + uracil. Regulates transcriptional attenuation of the pyrimidine nucleotide (pyr) operon by binding in a uridine-dependent manner to specific sites on pyr mRNA. This disrupts an antiterminator hairpin in the RNA and favors formation of a downstream transcription terminator, leading to a reduced expression of downstream genes. Its function is as follows. Also displays a weak uracil phosphoribosyltransferase activity which is not physiologically significant. The chain is Bifunctional protein PyrR from Streptococcus gordonii (strain Challis / ATCC 35105 / BCRC 15272 / CH1 / DL1 / V288).